Here is a 635-residue protein sequence, read N- to C-terminus: MPSWALFMVTSCLLLAPQNLAQVSSQDVSLLASDSEPLKCFSRTFEDLTCFWDEEEAAPSGTYQLLYAYPREKPRACPLSSQSMPHFGTRYVCQFPDQEEVRLFFPLHLWVKNVFLNQTRTQRVLFVDSVGLPAPPSIIKAMGGSQPGELQISWEEPAPEISDFLRYELRYGPRDPKNSTGPTVIQLIATETCCPALQRPHSASALDQSPCAQPTMPWQDGPKQTSPSREASALTAEGGSCLISGLQPGNSYWLQLRSEPDGISLGGSWGSWSLPVTVDLPGDAVALGLQCFTLDLKNVTCQWQQQDHASSQGFFYHSRARCCPRDRYPIWENCEEEEKTNPGLQTPQFSRCHFKSRNDSIIHILVEVTTAPGTVHSYLGSPFWIHQAVRLPTPNLHWREISSGHLELEWQHPSSWAAQETCYQLRYTGEGHQDWKVLEPPLGARGGTLELRPRSRYRLQLRARLNGPTYQGPWSSWSDPTRVETATETAWISLVTALHLVLGLSAVLGLLLLRWQFPAHYRRLRHALWPSLPDLHRVLGQYLRDTAALSPPKATVSDTCEEVEPSLLEILPKSSERTPLPLCSSQAQMDYRRLQPSCLGTMPLSVCPPMAESGSCCTTHIANHSYLPLSYWQQP.

Residues 1-25 form the signal peptide; it reads MPSWALFMVTSCLLLAPQNLAQVSS. At 26–491 the chain is on the extracellular side; it reads QDVSLLASDS…RVETATETAW (466 aa). Intrachain disulfides connect cysteine 40/cysteine 50 and cysteine 77/cysteine 93. N-linked (GlcNAc...) asparagine glycosylation is found at asparagine 117 and asparagine 178. The Fibronectin type-III 1 domain occupies 172-281; that stretch reads GPRDPKNSTG…WSLPVTVDLP (110 aa). Disulfide bonds link cysteine 193–cysteine 323, cysteine 194–cysteine 241, cysteine 291–cysteine 301, and cysteine 334–cysteine 352. Residues 205–232 are disordered; that stretch reads ALDQSPCAQPTMPWQDGPKQTSPSREAS. N-linked (GlcNAc...) asparagine glycosylation is present at asparagine 298. A glycan (N-linked (GlcNAc...) asparagine) is linked at asparagine 358. Residues 392–486 enclose the Fibronectin type-III 2 domain; the sequence is PTPNLHWREI…WSDPTRVETA (95 aa). A WSXWS motif motif is present at residues 474-478; the sequence is WSSWS. Residues 492-513 traverse the membrane as a helical segment; the sequence is ISLVTALHLVLGLSAVLGLLLL. The Cytoplasmic segment spans residues 514–635; that stretch reads RWQFPAHYRR…YLPLSYWQQP (122 aa). Residues 528–536 carry the Box 1 motif motif; sequence LWPSLPDLH. Residues lysine 553 and lysine 573 each participate in a glycyl lysine isopeptide (Lys-Gly) (interchain with G-Cter in ubiquitin) cross-link. Tyrosine 591, tyrosine 626, and tyrosine 631 each carry phosphotyrosine.

The protein belongs to the type I cytokine receptor family. Type 1 subfamily. In terms of assembly, homodimer. Interacts with ATXN2L. Interacts with JAK2 and TYK2; these interactions increase MPL localization to the cell membrane. Interacts with THPO. Interacts with SHIP/INPP5D. Interacts with BTK. Interacts with SYK; this interaction negatively regulates THPO-mediated ERK1/2 signaling. Post-translationally, phosphorylated at Tyr-591 in response to THPO stimulation. Ubiquitination at Lys-553 and Lys-573 targets MPL for degradation by both the lysosomal and proteasomal pathways. The E3 ubiquitin-protein ligase CBL significantly contributes to this ubiquitination. As to expression, expressed at a low level in a large number of cells of hematopoietic origin. Isoform 1 and isoform 2 are always found to be coexpressed.

It is found in the cell membrane. The protein localises to the golgi apparatus. Its subcellular location is the cell surface. Its function is as follows. Receptor for thrombopoietin that regulates hematopoietic stem cell renewal, megakaryocyte differentiation, and platelet formation. Upon activation by THPO, induces rapid tyrosine phosphorylation and activation of JAK2, providing docking sites for many signaling proteins such as STAT5, SHIP/INPP5D, GRB2, SOS1 and PI3K. In turn, These signaling cascades lead to the proliferation, survival, and differentiation of megakaryocytes, ultimately leading to increased platelet production. The protein is Thrombopoietin receptor (MPL) of Homo sapiens (Human).